Consider the following 752-residue polypeptide: Phosphatidylinositol 4-phosphate 5-kinase 1 (752 aa).

MORN repeat units follow at residues 81–103, 104–126, 127–149, 150–172, 173–195, 196–218, and 219–241; these read YIGS…DGCM, YEGD…SGAT, YEGE…DGDT, YRGT…NGDF, YEGT…NGNQ, YTGE…NGNR, and YEGL…DGSS. Residues 349–748 enclose the PIPK domain; sequence SKGHKKYDLM…RFRDFISRIF (400 aa). An activation loop region spans residues 708–729; sequence YDITKKIEHAYKSLQADPASIS.

Post-translationally, phosphorylation inactivates the enzyme. In terms of tissue distribution, expressed in the whole plant, preferentially in roots. Strongly expressed in meristematic tissues, namely procambial cell layers.

The enzyme catalyses a 1,2-diacyl-sn-glycero-3-phospho-(1D-myo-inositol 4-phosphate) + ATP = a 1,2-diacyl-sn-glycero-3-phospho-(1D-myo-inositol-4,5-bisphosphate) + ADP + H(+). Functionally, catalyzes the synthesis of phosphatidylinositol 4,5-bisphosphate and phosphatidylinositol 3,4-bisphosphate. The polypeptide is Phosphatidylinositol 4-phosphate 5-kinase 1 (PIP5K1) (Arabidopsis thaliana (Mouse-ear cress)).